Here is a 527-residue protein sequence, read N- to C-terminus: Importin subunit alpha (527 aa).

The IBB domain occupies 1–58; it reads MSLRPNSRTEARRSRYKVAVDAEEGRRRREDNMVEIRKNKREENLLKKRREGLLQAQQ. ARM repeat units lie at residues 109–151, 152–196, 197–234, 235–279, 280–319, 320–362, 363–403, and 404–445; these read IEEV…TSEN, TKVV…YRDL, VLGH…RGKP, QPLF…DKIQ, AVIE…DDIQ, TQVM…NRNQ, IQIV…GGNH, and DQIK…KIGE.

It belongs to the importin alpha family. Forms a complex with importin subunit beta-1.

Its subcellular location is the cytoplasm. In terms of biological role, binds specifically and directly to substrates containing either a simple or bipartite NLS motif. Promotes docking of import substrates to the nuclear envelope. Seems to act as a cytosolic receptor for both simple and bipartite NLS motifs. This Solanum lycopersicum (Tomato) protein is Importin subunit alpha.